Consider the following 399-residue polypeptide: MAERRRHKKRIQEVGEPSKEEKAVAKYLRFNCPTKSTNMMGHRVDYFIASKAVDCLLDSKWAKAKKGEEALFTTRESVVDYCNRLLKKQFFHRALKVMKMKYDKDIKKEKDKGKAESGKEEDKKSKKENIKDEKTKKEKEKKKDGEKEESKKEETPGTPKKKETKKKFKLEPHDDQVFLDGNEVYVWIYDPVHFKTFVMGLILVIAVIAATLFPLWPAEMRVGVYYLSVGAGCFVASILLLAVARCILFLIIWLITGGRHHFWFLPNLTADVGFIDSFRPLYTHEYKGPKADLKKDEKSETKKQQKSDSEEKSDSEKKEDEEGKVGPGNHGTEGSGGERHSDTDSDRREDDRSQHSSGNGNDFEMITKEELEQQTDGDCEEDEEEENDGETPKSSHEKS.

The Cytoplasmic segment spans residues 1 to 196; the sequence is MAERRRHKKR…WIYDPVHFKT (196 aa). Over residues 108–155 the composition is skewed to basic and acidic residues; the sequence is KEKDKGKAESGKEEDKKSKKENIKDEKTKKEKEKKKDGEKEESKKEET. The segment at 108–167 is disordered; that stretch reads KEKDKGKAESGKEEDKKSKKENIKDEKTKKEKEKKKDGEKEESKKEETPGTPKKKETKKK. Residue Thr158 is modified to Phosphothreonine. A helical membrane pass occupies residues 197–217; the sequence is FVMGLILVIAVIAATLFPLWP. Over 218–234 the chain is Lumenal; the sequence is AEMRVGVYYLSVGAGCF. A helical membrane pass occupies residues 235–255; that stretch reads VASILLLAVARCILFLIIWLI. The Cytoplasmic portion of the chain corresponds to 256-399; it reads TGGRHHFWFL…ETPKSSHEKS (144 aa). Basic and acidic residues predominate over residues 289–324; sequence PKADLKKDEKSETKKQQKSDSEEKSDSEKKEDEEGK. Positions 289–399 are disordered; the sequence is PKADLKKDEK…ETPKSSHEKS (111 aa). A compositionally biased stretch (gly residues) spans 325–335; it reads VGPGNHGTEGS. Phosphoserine is present on residues Ser335, Ser341, Ser353, and Ser356. Over residues 336–354 the composition is skewed to basic and acidic residues; it reads GGERHSDTDSDRREDDRSQ. The segment covering 372–389 has biased composition (acidic residues); that stretch reads EQQTDGDCEEDEEEENDG. Position 375 is a phosphothreonine (Thr375). Residues 390–399 are compositionally biased toward basic and acidic residues; sequence ETPKSSHEKS.

It belongs to the SEC62 family. In terms of assembly, the ER translocon complex that consists of channel-forming core components SEC61A1, SEC61B and SEC61G and different auxiliary components such as SEC62 and SEC63. Interacts with SEC61B.

The protein resides in the endoplasmic reticulum membrane. Functionally, mediates post-translational transport of precursor polypeptides across endoplasmic reticulum (ER). Proposed to act as a targeting receptor for small presecretory proteins containing short and apolar signal peptides. Targets and properly positions newly synthesized presecretory proteins into the SEC61 channel-forming translocon complex, triggering channel opening for polypeptide translocation to the ER lumen. The chain is Translocation protein SEC62 (SEC62) from Homo sapiens (Human).